Consider the following 37-residue polypeptide: Large ribosomal subunit protein bL36 (37 aa).

Belongs to the bacterial ribosomal protein bL36 family.

This chain is Large ribosomal subunit protein bL36, found in Histophilus somni (strain 129Pt) (Haemophilus somnus).